The chain runs to 138 residues: MERCLILVKPDGVERNLIGEVISRFERKGLAIKALKMMRVTREQAEDHYSVHRLKPFFDDLVSYLTSGPIVAMIVEGNNAIASSRMLAGATDGSKAAPGTIRGDFSLDIERNIVHASDSLESYEHEYKIFFNENEIMD.

6 residues coordinate ATP: Lys9, Phe57, Arg85, Thr91, Arg102, and Asn112. The Pros-phosphohistidine intermediate role is filled by His115.

Belongs to the NDK family. Mg(2+) serves as cofactor.

It is found in the cytoplasm. The catalysed reaction is a 2'-deoxyribonucleoside 5'-diphosphate + ATP = a 2'-deoxyribonucleoside 5'-triphosphate + ADP. The enzyme catalyses a ribonucleoside 5'-diphosphate + ATP = a ribonucleoside 5'-triphosphate + ADP. In terms of biological role, major role in the synthesis of nucleoside triphosphates other than ATP. The ATP gamma phosphate is transferred to the NDP beta phosphate via a ping-pong mechanism, using a phosphorylated active-site intermediate. The sequence is that of Nucleoside diphosphate kinase from Picrophilus torridus (strain ATCC 700027 / DSM 9790 / JCM 10055 / NBRC 100828 / KAW 2/3).